The primary structure comprises 776 residues: Rho guanine nucleotide exchange factor 6 (776 aa).

The 111-residue stretch at M1–E111 folds into the Calponin-homology (CH) domain. The tract at residues S115–K151 is disordered. Polar residues predominate over residues R121–K151. S126 carries the phosphoserine modification. The residue at position 133 (T133) is a Phosphothreonine. Residues S144 and S150 each carry the phosphoserine modification. The region spanning S160–S219 is the SH3 domain. Phosphoserine is present on S225. One can recognise a DH domain in the interval Y241 to L421. The PH domain occupies D443–R548. Residue S488 is modified to Phosphoserine. A compositionally biased stretch (low complexity) spans S561–S572. A disordered region spans residues S561–E581. Phosphoserine is present on residues S640 and S684.

Interacts with PAK kinases through the SH3 domain. Interacts with GIT1. Component of cytoplasmic complexes, which also contain PXN, GIT1 and PAK1. Interacts with PARVB. Interacts with BIN2. Identified in a complex with BIN2 and GIT2. Interacts with PARVG; the guanine nucleotide exchange factor activity of ARHGEF6 is essential for PARVG-induced enhancement of cell spreading. In terms of tissue distribution, ubiquitous.

It localises to the cell projection. It is found in the lamellipodium. Functionally, acts as a RAC1 guanine nucleotide exchange factor (GEF). This is Rho guanine nucleotide exchange factor 6 (ARHGEF6) from Homo sapiens (Human).